An 807-amino-acid chain; its full sequence is Phenylalanine--tRNA ligase beta subunit (807 aa).

The tRNA-binding domain occupies 39-153 (SARSQGVVVG…EIPAVGTPVA (115 aa)). The B5 domain occupies 407–491 (RTPVPLQLRR…RLVGFDKFGS (85 aa)). The Mg(2+) site is built by aspartate 469, aspartate 475, glutamate 478, and glutamate 479. One can recognise an FDX-ACB domain in the interval 713-806 (PTVPASERDL…LSKQFKAELR (94 aa)).

The protein belongs to the phenylalanyl-tRNA synthetase beta subunit family. Type 1 subfamily. In terms of assembly, tetramer of two alpha and two beta subunits. Mg(2+) serves as cofactor.

It localises to the cytoplasm. It catalyses the reaction tRNA(Phe) + L-phenylalanine + ATP = L-phenylalanyl-tRNA(Phe) + AMP + diphosphate + H(+). The sequence is that of Phenylalanine--tRNA ligase beta subunit from Synechococcus sp. (strain CC9902).